A 69-amino-acid polypeptide reads, in one-letter code: Conotoxin Lt5.7 (69 aa).

The signal sequence occupies residues 1–19; it reads MLCLPVFIILLLLASPAAP. The propeptide occupies 20–54; that stretch reads KSLETRIQNDLIRAGLTDADLKTEKGFLSGLLNVA.

It belongs to the conotoxin T superfamily. Contains 2 disulfide bonds that can be either 'C1-C3, C2-C4' or 'C1-C4, C2-C3', since these disulfide connectivities have been observed for conotoxins with cysteine framework V (for examples, see AC P0DQQ7 and AC P81755). In terms of tissue distribution, expressed by the venom duct.

The protein resides in the secreted. This Conus litteratus (Lettered cone) protein is Conotoxin Lt5.7.